Here is a 57-residue protein sequence, read N- to C-terminus: Large ribosomal subunit protein bL32 (57 aa).

Belongs to the bacterial ribosomal protein bL32 family.

The protein is Large ribosomal subunit protein bL32 (rpmF) of Halalkalibacterium halodurans (strain ATCC BAA-125 / DSM 18197 / FERM 7344 / JCM 9153 / C-125) (Bacillus halodurans).